Consider the following 155-residue polypeptide: Interleukin-2 (155 aa).

The first 20 residues, 1–20, serve as a signal peptide directing secretion; sequence MYRMQLLSCIALTLALVANG. Thr23 carries O-linked (GalNAc...) threonine glycosylation. A disulfide bridge links Cys79 with Cys127.

This sequence belongs to the IL-2 family.

The protein localises to the secreted. Functionally, cytokine produced by activated CD4-positive helper T-cells and to a lesser extend activated CD8-positive T-cells and natural killer (NK) cells that plays pivotal roles in the immune response and tolerance. Binds to a receptor complex composed of either the high-affinity trimeric IL-2R (IL2RA/CD25, IL2RB/CD122 and IL2RG/CD132) or the low-affinity dimeric IL-2R (IL2RB and IL2RG). Interaction with the receptor leads to oligomerization and conformation changes in the IL-2R subunits resulting in downstream signaling starting with phosphorylation of JAK1 and JAK3. In turn, JAK1 and JAK3 phosphorylate the receptor to form a docking site leading to the phosphorylation of several substrates including STAT5. This process leads to activation of several pathways including STAT, phosphoinositide-3-kinase/PI3K and mitogen-activated protein kinase/MAPK pathways. Functions as a T-cell growth factor and can increase NK-cell cytolytic activity as well. Promotes strong proliferation of activated B-cells and subsequently immunoglobulin production. Plays a pivotal role in regulating the adaptive immune system by controlling the survival and proliferation of regulatory T-cells, which are required for the maintenance of immune tolerance. Moreover, participates in the differentiation and homeostasis of effector T-cell subsets, including Th1, Th2, Th17 as well as memory CD8-positive T-cells. This chain is Interleukin-2 (IL2), found in Capra hircus (Goat).